We begin with the raw amino-acid sequence, 250 residues long: Ubiquinone/menaquinone biosynthesis C-methyltransferase UbiE (250 aa).

S-adenosyl-L-methionine contacts are provided by residues Thr-73, Asp-94, 122–123 (NS), and Ser-139.

Belongs to the class I-like SAM-binding methyltransferase superfamily. MenG/UbiE family.

The catalysed reaction is a 2-demethylmenaquinol + S-adenosyl-L-methionine = a menaquinol + S-adenosyl-L-homocysteine + H(+). It catalyses the reaction a 2-methoxy-6-(all-trans-polyprenyl)benzene-1,4-diol + S-adenosyl-L-methionine = a 5-methoxy-2-methyl-3-(all-trans-polyprenyl)benzene-1,4-diol + S-adenosyl-L-homocysteine + H(+). It functions in the pathway quinol/quinone metabolism; menaquinone biosynthesis; menaquinol from 1,4-dihydroxy-2-naphthoate: step 2/2. Its pathway is cofactor biosynthesis; ubiquinone biosynthesis. In terms of biological role, methyltransferase required for the conversion of demethylmenaquinol (DMKH2) to menaquinol (MKH2) and the conversion of 2-polyprenyl-6-methoxy-1,4-benzoquinol (DDMQH2) to 2-polyprenyl-3-methyl-6-methoxy-1,4-benzoquinol (DMQH2). This chain is Ubiquinone/menaquinone biosynthesis C-methyltransferase UbiE, found in Wigglesworthia glossinidia brevipalpis.